A 118-amino-acid chain; its full sequence is Small ribosomal subunit protein uS13 (118 aa).

Residues 91–118 (HRRSLPVRGQRTKTNARTRKGPRKPIKA) are disordered.

The protein belongs to the universal ribosomal protein uS13 family. As to quaternary structure, part of the 30S ribosomal subunit. Forms a loose heterodimer with protein S19. Forms two bridges to the 50S subunit in the 70S ribosome.

Its function is as follows. Located at the top of the head of the 30S subunit, it contacts several helices of the 16S rRNA. In the 70S ribosome it contacts the 23S rRNA (bridge B1a) and protein L5 of the 50S subunit (bridge B1b), connecting the 2 subunits; these bridges are implicated in subunit movement. Contacts the tRNAs in the A and P-sites. The chain is Small ribosomal subunit protein uS13 from Francisella tularensis subsp. tularensis (strain FSC 198).